The following is a 448-amino-acid chain: Probable glycine dehydrogenase (decarboxylating) subunit 1 (448 aa).

This sequence belongs to the GcvP family. N-terminal subunit subfamily. As to quaternary structure, the glycine cleavage system is composed of four proteins: P, T, L and H. In this organism, the P 'protein' is a heterodimer of two subunits.

It catalyses the reaction N(6)-[(R)-lipoyl]-L-lysyl-[glycine-cleavage complex H protein] + glycine + H(+) = N(6)-[(R)-S(8)-aminomethyldihydrolipoyl]-L-lysyl-[glycine-cleavage complex H protein] + CO2. In terms of biological role, the glycine cleavage system catalyzes the degradation of glycine. The P protein binds the alpha-amino group of glycine through its pyridoxal phosphate cofactor; CO(2) is released and the remaining methylamine moiety is then transferred to the lipoamide cofactor of the H protein. In Pyrococcus furiosus (strain ATCC 43587 / DSM 3638 / JCM 8422 / Vc1), this protein is Probable glycine dehydrogenase (decarboxylating) subunit 1.